Consider the following 236-residue polypeptide: 2-C-methyl-D-erythritol 4-phosphate cytidylyltransferase (236 aa).

Belongs to the IspD/TarI cytidylyltransferase family. IspD subfamily. In terms of assembly, homodimer.

The catalysed reaction is 2-C-methyl-D-erythritol 4-phosphate + CTP + H(+) = 4-CDP-2-C-methyl-D-erythritol + diphosphate. The protein operates within isoprenoid biosynthesis; isopentenyl diphosphate biosynthesis via DXP pathway; isopentenyl diphosphate from 1-deoxy-D-xylulose 5-phosphate: step 2/6. Catalyzes the formation of 4-diphosphocytidyl-2-C-methyl-D-erythritol from CTP and 2-C-methyl-D-erythritol 4-phosphate (MEP). This is 2-C-methyl-D-erythritol 4-phosphate cytidylyltransferase from Cronobacter sakazakii (strain ATCC BAA-894) (Enterobacter sakazakii).